A 303-amino-acid polypeptide reads, in one-letter code: Cell division protein ZipA (303 aa).

Residues 1-6 (MMQDLR) lie on the Periplasmic side of the membrane. A helical transmembrane segment spans residues 7–27 (LILIIVGAIAIIALLLHGLWT). The Cytoplasmic portion of the chain corresponds to 28 to 303 (SRKERSSLFR…RIRSTLGVQV (276 aa)). Disordered regions lie at residues 39–61 (RPVK…DEAF), 66–85 (KPYA…EPAI), and 124–159 (EQEP…GEKE). 2 stretches are compositionally biased toward basic and acidic residues: residues 75–85 (SHQEYKAEPAI) and 139–159 (ESER…GEKE).

Belongs to the ZipA family. Interacts with FtsZ via their C-terminal domains.

It is found in the cell inner membrane. In terms of biological role, essential cell division protein that stabilizes the FtsZ protofilaments by cross-linking them and that serves as a cytoplasmic membrane anchor for the Z ring. Also required for the recruitment to the septal ring of downstream cell division proteins. The polypeptide is Cell division protein ZipA (Photorhabdus laumondii subsp. laumondii (strain DSM 15139 / CIP 105565 / TT01) (Photorhabdus luminescens subsp. laumondii)).